The chain runs to 486 residues: Recombining binding protein suppressor of hairless (486 aa).

2 DNA-binding regions span residues 43–53 (QKSYGNEKRFF) and 151–156 (SKPSKK). Lys-161 is subject to N6-acetyllysine. The segment at 178–183 (RLRSQT) is DNA-binding. Residues 341–431 (PVVESLQLNG…YSTSLTFTYT (91 aa)) form the IPT/TIG domain. Polar residues predominate over residues 451–467 (SSQVPPNESNTNSEGSY). The disordered stretch occupies residues 451-486 (SSQVPPNESNTNSEGSYTNASTNSTSVTSSTATVVS). The segment covering 468-486 (TNASTNSTSVTSSTATVVS) has biased composition (low complexity).

This sequence belongs to the Su(H) family. Interacts with activated NOTCH1, NOTCH2 or NOTCH3. Interacts with MINT/SHARP. This interaction may mediate the recruitment of large corepressor complexes containing proteins such as HDAC1, HDAC2, NCOR2, SAP30, FHL1/KYOT2 and CIR1. Interacts with EP300, MAML1 and PTF1A. Interacts with RITA1, leading to nuclear export, prevent the interaction between RBPJ and NICD product and subsequent down-regulation of the Notch signaling pathway. Interacts with SNW1. Interacts with CHCHD2 and CXXC5. Interacts with BEND6 (via BEN domain). Interacts with NKAPL. Interacts with ZMIZ1. Interacts with RBM15. Interacts with L3MBTL3 and KDM1A; the interaction with KDM1A is weaker in the absence of L3MBTL3 and the interaction with L3MBTL3 is impaired by Notch-derived peptides containing the intracellular domain (NICD).

It localises to the nucleus. The protein localises to the cytoplasm. Functionally, transcriptional regulator that plays a central role in Notch signaling, a signaling pathway involved in cell-cell communication that regulates a broad spectrum of cell-fate determinations. Acts as a transcriptional repressor when it is not associated with Notch proteins. When associated with some NICD product of Notch proteins (Notch intracellular domain), it acts as a transcriptional activator that activates transcription of Notch target genes. Probably represses or activates transcription via the recruitment of chromatin remodeling complexes containing histone deacetylase or histone acetylase proteins, respectively. Specifically binds to the immunoglobulin kappa-type J segment recombination signal sequence. Binds specifically to methylated DNA. Binds to the oxygen responsive element of COX4I2 and activates its transcription under hypoxia conditions (4% oxygen). Negatively regulates the phagocyte oxidative burst in response to bacterial infection by repressing transcription of NADPH oxidase subunits. The polypeptide is Recombining binding protein suppressor of hairless (RBPJ) (Pongo abelii (Sumatran orangutan)).